The primary structure comprises 712 residues: Eukaryotic translation initiation factor 3 subunit B (712 aa).

Positions 1–98 (MSLTEAEYHE…LFVQFETSEM (98 aa)) are sufficient for interaction with HCR1 and TIF32. Residues 1–224 (MSLTEAEYHE…GVQSWGGADF (224 aa)) form a sufficient for interaction with PIC8 region. Residues 37-124 (NYVVVDGAPI…HRLLVNRLSD (88 aa)) form the RRM domain. 7 WD repeats span residues 191 to 229 (RKFF…SIDK), 230 to 293 (FMHN…RTFA), 301 to 339 (QKEM…LLDK), 342 to 384 (IKID…QTAR), 452 to 493 (ELKE…DFYA), 513 to 555 (ITDK…SNKN), and 566 to 604 (DKFS…YEFT).

Belongs to the eIF-3 subunit B family. Component of the eukaryotic translation initiation factor 3 (eIF-3) complex.

It is found in the cytoplasm. Functionally, RNA-binding component of the eukaryotic translation initiation factor 3 (eIF-3) complex, which is involved in protein synthesis of a specialized repertoire of mRNAs and, together with other initiation factors, stimulates binding of mRNA and methionyl-tRNAi to the 40S ribosome. The eIF-3 complex specifically targets and initiates translation of a subset of mRNAs involved in cell proliferation. This chain is Eukaryotic translation initiation factor 3 subunit B, found in Scheffersomyces stipitis (strain ATCC 58785 / CBS 6054 / NBRC 10063 / NRRL Y-11545) (Yeast).